A 546-amino-acid polypeptide reads, in one-letter code: 3-(3-hydroxy-phenyl)propionate/3-hydroxycinnamic acid hydroxylase 2 (546 aa).

FAD is bound by residues 10–39 (SVAI…VVER) and 278–288 (FVAGRIALVGD).

It belongs to the PheA/TfdB FAD monooxygenase family. It depends on FAD as a cofactor.

The enzyme catalyses 3-(3-hydroxyphenyl)propanoate + NADH + O2 + H(+) = 3-(2,3-dihydroxyphenyl)propanoate + NAD(+) + H2O. The catalysed reaction is (2E)-3-(3-hydroxyphenyl)prop-2-enoate + NADH + O2 + H(+) = (2E)-3-(2,3-dihydroxyphenyl)prop-2-enoate + NAD(+) + H2O. It participates in aromatic compound metabolism; 3-phenylpropanoate degradation. Functionally, catalyzes the insertion of one atom of molecular oxygen into position 2 of the phenyl ring of 3-(3-hydroxyphenyl)propionate (3-HPP) and hydroxycinnamic acid (3HCI). The polypeptide is 3-(3-hydroxy-phenyl)propionate/3-hydroxycinnamic acid hydroxylase 2 (Burkholderia vietnamiensis (strain G4 / LMG 22486) (Burkholderia cepacia (strain R1808))).